A 311-amino-acid polypeptide reads, in one-letter code: Mitochondrial arginine transporter BAC1 (311 aa).

3 Solcar repeats span residues Phe12–Phe101, Pro111–His203, and Val219–Met305. 6 consecutive transmembrane segments (helical) span residues Tyr18–Val38, Gly76–Ser96, Pro113–Pro133, Gly178–Tyr197, Gly222–Phe242, and Ala288–Ile308.

Belongs to the mitochondrial carrier (TC 2.A.29) family. In terms of tissue distribution, high expression in flowers and siliques. Lower expression in leaves and stems.

It is found in the mitochondrion inner membrane. Its activity is regulated as follows. Inhibited by mercuric chloride. In terms of biological role, mitochondrial arginine transporter that catalyzes the counter-exchange of arginine with lysine, ornithine, arginine and histidine. Substrate preference in reconstituted proteoliposomes is arginine &gt; lysine &gt; ornithine &gt; histidine. May be involved in the delivery of arginine, released from seed reserves, to mitochondrial arginase and the export of ornithine. The protein is Mitochondrial arginine transporter BAC1 (BAC1) of Arabidopsis thaliana (Mouse-ear cress).